The primary structure comprises 123 residues: Protein Wnt-7a (123 aa).

The O-palmitoleoyl serine; by PORCN moiety is linked to residue Ser-1. The segment at Val-33–Thr-61 is disordered linker. The cysteines at positions 89 and 104 are disulfide-linked. Asn-90 and Asn-96 each carry an N-linked (GlcNAc...) asparagine glycan.

It belongs to the Wnt family. In terms of assembly, forms a soluble 1:1 complex with AFM; this prevents oligomerization and is required for prolonged biological activity. The complex with AFM may represent the physiological form in body fluids. Interacts with FZD5. Interacts with PORCN. Post-translationally, palmitoleoylation is required for efficient binding to frizzled receptors. Depalmitoleoylation leads to Wnt signaling pathway inhibition.

The protein localises to the secreted. The protein resides in the extracellular space. It is found in the extracellular matrix. Functionally, ligand for members of the frizzled family of seven transmembrane receptors that functions in the canonical Wnt/beta-catenin signaling pathway. Plays an important role in embryonic development, including dorsal versus ventral patterning during limb development, skeleton development and urogenital tract development. Required for central nervous system (CNS) angiogenesis and blood-brain barrier regulation. This chain is Protein Wnt-7a (WNT-7A), found in Alopias vulpinus (Common thresher shark).